Here is a 355-residue protein sequence, read N- to C-terminus: DNA polymerase IV (355 aa).

Residues 6–187 (IIHVDMDAFY…LPVGKIHGVG (182 aa)) enclose the UmuC domain. Positions 10 and 105 each coordinate Mg(2+). Glutamate 106 is an active-site residue.

This sequence belongs to the DNA polymerase type-Y family. In terms of assembly, monomer. Mg(2+) is required as a cofactor.

It is found in the cytoplasm. The catalysed reaction is DNA(n) + a 2'-deoxyribonucleoside 5'-triphosphate = DNA(n+1) + diphosphate. Poorly processive, error-prone DNA polymerase involved in untargeted mutagenesis. Copies undamaged DNA at stalled replication forks, which arise in vivo from mismatched or misaligned primer ends. These misaligned primers can be extended by PolIV. Exhibits no 3'-5' exonuclease (proofreading) activity. May be involved in translesional synthesis, in conjunction with the beta clamp from PolIII. This chain is DNA polymerase IV, found in Alkalilimnicola ehrlichii (strain ATCC BAA-1101 / DSM 17681 / MLHE-1).